The sequence spans 82 residues: RNA-binding protein Hfq (82 aa).

The Sm domain maps to 9-68; the sequence is DPFLNTLRKEHVPVSIYLVNGIKLQGKVDSFDQYVIMLKNTVSQMVYKHAISTIVPGRPV.

Belongs to the Hfq family. In terms of assembly, homohexamer.

Its function is as follows. RNA chaperone that binds small regulatory RNA (sRNAs) and mRNAs to facilitate mRNA translational regulation in response to envelope stress, environmental stress and changes in metabolite concentrations. Also binds with high specificity to tRNAs. This is RNA-binding protein Hfq from Methylococcus capsulatus (strain ATCC 33009 / NCIMB 11132 / Bath).